Consider the following 533-residue polypeptide: MVVSSPSVSLLHSPVEKLSAQLEKTTLLQDIPPGSLSENDNSTTFIKPPLETASSSTPIPSSSSSGVLNPSSVRGKPVACLFVASLNSSRSEEELTATVKDYFQQWGPLLHVKVLKDWLQRPYSFVQFQNTDDASKALSEAQNTILDGRHIRIERAKVNRTIRISSAPHQPYITKKDIDNLLEPYGEVEDVTEIPDQSAFLVRFVYRDEAIAAYTALKHSAWPVLWAENVTYQNGHYKKKGSSPFSPPNAHSRRRKSQGKDQSNTPVIKAPAPIPFSVSSDPPSTMGRSNSAVQSPSYFAHSLVNSTEFSTPNESLSSLPSILPSIPSLESGKAELPTDGSFEQPGYPMNPSMMFAAMPPPIDPYSIFVGQLDPVNCTHYLLVDLFSKYGKVIDCKIIHQSKKPAFAFLRFDSQQAAYAAVCGKTRSPHQKKPLRVEFRQLRPMQQFSPQYQYPSYPYPMFPAPFSPPRNAMMPIPAPMDQFSTFHQSMATLPPGAVPTSIPQSYYPIYSPEMAMPQSYSPMYYTHNPPMDGN.

The interval 30–68 (DIPPGSLSENDNSTTFIKPPLETASSSTPIPSSSSSGVL) is disordered. A compositionally biased stretch (polar residues) spans 36–45 (LSENDNSTTF). Residues 54–68 (SSSTPIPSSSSSGVL) are compositionally biased toward low complexity. An RRM 1 domain is found at 79 to 158 (ACLFVASLNS…RHIRIERAKV (80 aa)). The interval 237–292 (YKKKGSSPFSPPNAHSRRRKSQGKDQSNTPVIKAPAPIPFSVSSDPPSTMGRSNSA) is disordered. The span at 277-292 (SVSSDPPSTMGRSNSA) shows a compositional bias: polar residues. Residues 365–441 (YSIFVGQLDP…KPLRVEFRQL (77 aa)) form the RRM 2 domain.

It is found in the cytoplasm. In terms of biological role, negative regulator of sexual differentiation. Acts by repressing the transcription of meiosis-inducing, ste11-regulated genes. This is Multicopy suppressor of sporulation protein msa1 (msa1) from Schizosaccharomyces pombe (strain 972 / ATCC 24843) (Fission yeast).